The primary structure comprises 224 residues: Peroxiredoxin-6 (224 aa).

The region spanning 5–169 is the Thioredoxin domain; sequence LLLGDEAPNF…ILRVVISLQL (165 aa). Positions 31–40 are required and sufficient for targeting to lysosomes and lamellar bodies; that stretch reads DSWGILFSHP. The residue at position 44 (T44) is a Phosphothreonine. The active-site Cysteine sulfenic acid (-SOH) intermediate; for peroxidase activity is C47. N6-acetyllysine is present on K63. Phosphotyrosine is present on Y89. D140 functions as the For phospholipase activity in the catalytic mechanism. T177 is subject to Phosphothreonine; by MAPK. The residue at position 209 (K209) is an N6-acetyllysine; alternate. K209 carries the post-translational modification N6-succinyllysine; alternate.

Belongs to the peroxiredoxin family. Prx6 subfamily. As to quaternary structure, homodimer. Interacts with GSTP1; mediates PRDX6 glutathionylation and regeneration. Interacts with APEX1. Interacts with STH. May interact with FAM168B. May interact with HTR2A. Irreversibly inactivated by overoxidation of Cys-47 to sulfinic acid (Cys-SO(2)H) and sulfonic acid (Cys-SO(3)H) forms upon oxidative stress. Post-translationally, phosphorylation at Thr-177 by MAP kinases increases the phospholipase activity of the enzyme. The phosphorylated form exhibits a greater lysophosphatidylcholine acyltransferase activity compared to the non-phosphorylated form.

Its subcellular location is the cytoplasm. The protein localises to the lysosome. It catalyses the reaction a hydroperoxide + 2 glutathione = an alcohol + glutathione disulfide + H2O. It carries out the reaction a 1,2-diacyl-sn-glycero-3-phosphocholine + H2O = a 1-acyl-sn-glycero-3-phosphocholine + a fatty acid + H(+). The catalysed reaction is a 1-acyl-sn-glycero-3-phosphocholine + an acyl-CoA = a 1,2-diacyl-sn-glycero-3-phosphocholine + CoA. The enzyme catalyses 1-hexadecanoyl-sn-glycero-3-phosphocholine + hexadecanoyl-CoA = 1,2-dihexadecanoyl-sn-glycero-3-phosphocholine + CoA. It catalyses the reaction 1,2-dihexadecanoyl-sn-glycero-3-phosphocholine + H2O = 1-hexadecanoyl-sn-glycero-3-phosphocholine + hexadecanoate + H(+). Thiol-specific peroxidase that catalyzes the reduction of hydrogen peroxide and organic hydroperoxides to water and alcohols, respectively. Can reduce H(2)O(2) and short chain organic, fatty acid, and phospholipid hydroperoxides. Also has phospholipase activity, and can therefore either reduce the oxidized sn-2 fatty acyl group of phospholipids (peroxidase activity) or hydrolyze the sn-2 ester bond of phospholipids (phospholipase activity). These activities are dependent on binding to phospholipids at acidic pH and to oxidized phospholipds at cytosolic pH. Plays a role in cell protection against oxidative stress by detoxifying peroxides and in phospholipid homeostasis. Exhibits acyl-CoA-dependent lysophospholipid acyltransferase which mediates the conversion of lysophosphatidylcholine (1-acyl-sn-glycero-3-phosphocholine or LPC) into phosphatidylcholine (1,2-diacyl-sn-glycero-3-phosphocholine or PC). Shows a clear preference for LPC as the lysophospholipid and for palmitoyl CoA as the fatty acyl substrate. In Macaca fascicularis (Crab-eating macaque), this protein is Peroxiredoxin-6 (PRDX6).